We begin with the raw amino-acid sequence, 342 residues long: Ribosomal RNA small subunit methyltransferase C (342 aa).

Belongs to the methyltransferase superfamily. RsmC family. Monomer.

The protein resides in the cytoplasm. It catalyses the reaction guanosine(1207) in 16S rRNA + S-adenosyl-L-methionine = N(2)-methylguanosine(1207) in 16S rRNA + S-adenosyl-L-homocysteine + H(+). Functionally, specifically methylates the guanine in position 1207 of 16S rRNA in the 30S particle. The chain is Ribosomal RNA small subunit methyltransferase C from Enterobacter sp. (strain 638).